The following is a 245-amino-acid chain: tRNA pseudouridine synthase A (245 aa).

Aspartate 52 (nucleophile) is an active-site residue. Residue tyrosine 111 participates in substrate binding.

It belongs to the tRNA pseudouridine synthase TruA family. Homodimer.

The enzyme catalyses uridine(38/39/40) in tRNA = pseudouridine(38/39/40) in tRNA. Its function is as follows. Formation of pseudouridine at positions 38, 39 and 40 in the anticodon stem and loop of transfer RNAs. The polypeptide is tRNA pseudouridine synthase A (Xanthobacter autotrophicus (strain ATCC BAA-1158 / Py2)).